A 165-amino-acid chain; its full sequence is Protein NKG7 (165 aa).

The next 4 helical transmembrane spans lie at 9 to 29, 61 to 81, 92 to 112, and 133 to 153; these read LLGG…DFWF, FSIM…LSCF, LVST…MAVY, and FYLG…SLGA.

The protein belongs to the PMP-22/EMP/MP20 family. In terms of tissue distribution, expressed in activated T-cells, in kidney, liver, lung and pancreas. Not expressed in brain, heart, or skeletal muscle. Expressed at high levels in TCR gamma delta-expressing CTL clones, and in some TCR alpha beta-expressing CTL clones (both CD4+ and CD8+), but is not expressed in other TCR alpha beta-expressing CTL clones and in cell lines representing B-cells, monocytes, and myeloid cells.

It is found in the cell membrane. Its subcellular location is the cytolytic granule membrane. Its function is as follows. Regulates cytotoxic granule exocytosis in effector lymphocytes, thus acting as a critical mediator of inflammation in a broad range of infectious and non-infectious diseases. Essential for cytotoxic degranulation of natural killer (NK) cells and CD8(+) T-cells and for the activation of CD4(+) T-cells following infection. Plays a critical role in CD8(+) T-cell and NK cell-mediated cytolysis of target cells and contributes to the cytolytic activity via the perforin/granzyme pathway by enhancing exocytosis of LAMP1-carrying lytic granules. Contributes to NK cell-mediated control of cancer metastasis. This is Protein NKG7 (NKG7) from Homo sapiens (Human).